A 179-amino-acid polypeptide reads, in one-letter code: Large ribosomal subunit protein uL5 (179 aa).

The protein belongs to the universal ribosomal protein uL5 family. Part of the 50S ribosomal subunit; part of the 5S rRNA/L5/L18/L25 subcomplex. Contacts the 5S rRNA and the P site tRNA. Forms a bridge to the 30S subunit in the 70S ribosome.

Its function is as follows. This is one of the proteins that bind and probably mediate the attachment of the 5S RNA into the large ribosomal subunit, where it forms part of the central protuberance. In the 70S ribosome it contacts protein S13 of the 30S subunit (bridge B1b), connecting the 2 subunits; this bridge is implicated in subunit movement. Contacts the P site tRNA; the 5S rRNA and some of its associated proteins might help stabilize positioning of ribosome-bound tRNAs. This chain is Large ribosomal subunit protein uL5, found in Saccharophagus degradans (strain 2-40 / ATCC 43961 / DSM 17024).